Consider the following 469-residue polypeptide: 3-isopropylmalate dehydratase large subunit (469 aa).

Residues cysteine 349, cysteine 410, and cysteine 413 each contribute to the [4Fe-4S] cluster site.

Belongs to the aconitase/IPM isomerase family. LeuC type 1 subfamily. As to quaternary structure, heterodimer of LeuC and LeuD. [4Fe-4S] cluster is required as a cofactor.

It carries out the reaction (2R,3S)-3-isopropylmalate = (2S)-2-isopropylmalate. The protein operates within amino-acid biosynthesis; L-leucine biosynthesis; L-leucine from 3-methyl-2-oxobutanoate: step 2/4. Functionally, catalyzes the isomerization between 2-isopropylmalate and 3-isopropylmalate, via the formation of 2-isopropylmaleate. This chain is 3-isopropylmalate dehydratase large subunit, found in Neisseria meningitidis serogroup B (strain ATCC BAA-335 / MC58).